A 352-amino-acid polypeptide reads, in one-letter code: Molybdenum import ATP-binding protein ModC (352 aa).

The 229-residue stretch at 1–229 (MLELNFSQTL…SVMNPWLPKE (229 aa)) folds into the ABC transporter domain. 31–38 (GVSGAGKT) contacts ATP. Positions 289 to 352 (QTSIRNVLRA…AQIKSVSITA (64 aa)) constitute a Mop domain.

The protein belongs to the ABC transporter superfamily. Molybdate importer (TC 3.A.1.8) family. As to quaternary structure, the complex is composed of two ATP-binding proteins (ModC), two transmembrane proteins (ModB) and a solute-binding protein (ModA).

Its subcellular location is the cell inner membrane. It catalyses the reaction molybdate(out) + ATP + H2O = molybdate(in) + ADP + phosphate + H(+). Functionally, part of the ABC transporter complex ModABC involved in molybdenum import. Responsible for energy coupling to the transport system. The sequence is that of Molybdenum import ATP-binding protein ModC from Shigella boydii serotype 4 (strain Sb227).